The sequence spans 393 residues: Acyltransferase ato1 (393 aa).

Belongs to the lysine N-acyltransferase mbtK family.

It functions in the pathway siderophore biosynthesis; ferrichrome biosynthesis. L-ornithine N(5)-monooxygenase; part of the siderophore biosynthetic pathway. Omphalotus olearius produces ferrichrome A, but no other siderophore has been detected. Ferrichrome A consists of a hexapeptide ring made up of one glycine, two serine, and three N(5)-hydroxyornithine amino acid residues, the latter acylated by trans-(alpha-methyl)-glutaconic acid residues. The biosynthesis of ferrichrome A depends on the hydroxylation of ornithine to N(5)-hydroxyornithine, catalyzed by the monooxygenase omo1. The second step, the acylation of N(5)-hydroxy-L-ornithine is probably catalyzed by the N-acyltransferase ato1. Finally, assembly of ferrichrome A is catalyzed by the nonribosomal peptide synthase (NRPS) fso1. In Omphalotus olearius (Jack o'lantern), this protein is Acyltransferase ato1.